The chain runs to 297 residues: HTH-type transcriptional regulator ArgP (297 aa).

One can recognise an HTH lysR-type domain in the interval 4–60; the sequence is PDYRTLQALDAVIRERGFERAAQKLCITQSAVSQRIKQLENMFGQPLLVRTVPPRPT. Positions 21–40 form a DNA-binding region, H-T-H motif; the sequence is FERAAQKLCITQSAVSQRIK.

The protein belongs to the LysR transcriptional regulatory family. Homodimer.

Its function is as follows. Controls the transcription of genes involved in arginine and lysine metabolism. This Salmonella choleraesuis (strain SC-B67) protein is HTH-type transcriptional regulator ArgP.